A 1399-amino-acid chain; its full sequence is DNA-directed RNA polymerase subunit beta' (1399 aa).

Zn(2+) contacts are provided by Cys70, Cys72, Cys85, and Cys88. Asp460, Asp462, and Asp464 together coordinate Mg(2+). The Zn(2+) site is built by Cys814, Cys888, Cys895, and Cys898.

The protein belongs to the RNA polymerase beta' chain family. As to quaternary structure, the RNAP catalytic core consists of 2 alpha, 1 beta, 1 beta' and 1 omega subunit. When a sigma factor is associated with the core the holoenzyme is formed, which can initiate transcription. It depends on Mg(2+) as a cofactor. The cofactor is Zn(2+).

It carries out the reaction RNA(n) + a ribonucleoside 5'-triphosphate = RNA(n+1) + diphosphate. Its function is as follows. DNA-dependent RNA polymerase catalyzes the transcription of DNA into RNA using the four ribonucleoside triphosphates as substrates. The sequence is that of DNA-directed RNA polymerase subunit beta' from Pseudomonas entomophila (strain L48).